Here is a 380-residue protein sequence, read N- to C-terminus: Succinate--CoA ligase [ADP-forming] subunit beta (380 aa).

The region spanning 9 to 237 (RDLLARFGIP…PSAEPEAERR (229 aa)) is the ATP-grasp domain. ATP-binding positions include Lys-45, 52–54 (GRG), Val-94, and Glu-99. The Mg(2+) site is built by Asn-192 and Asp-206. Substrate contacts are provided by residues Asn-257 and 314–316 (GIT).

It belongs to the succinate/malate CoA ligase beta subunit family. In terms of assembly, heterotetramer of two alpha and two beta subunits. It depends on Mg(2+) as a cofactor.

The enzyme catalyses succinate + ATP + CoA = succinyl-CoA + ADP + phosphate. It catalyses the reaction GTP + succinate + CoA = succinyl-CoA + GDP + phosphate. It participates in carbohydrate metabolism; tricarboxylic acid cycle; succinate from succinyl-CoA (ligase route): step 1/1. Functionally, succinyl-CoA synthetase functions in the citric acid cycle (TCA), coupling the hydrolysis of succinyl-CoA to the synthesis of either ATP or GTP and thus represents the only step of substrate-level phosphorylation in the TCA. The beta subunit provides nucleotide specificity of the enzyme and binds the substrate succinate, while the binding sites for coenzyme A and phosphate are found in the alpha subunit. This Chloroflexus aurantiacus (strain ATCC 29366 / DSM 635 / J-10-fl) protein is Succinate--CoA ligase [ADP-forming] subunit beta.